A 296-amino-acid chain; its full sequence is Thioredoxin-related transmembrane protein 2 (296 aa).

An N-terminal signal peptide occupies residues 1-48; that stretch reads MAVLAPLIALVYSVPRLSRWLAQPYYLLSALLSAAFLLVRKLPPLCHG. Topologically, residues 49–102 are extracellular; sequence LPTQREDGNPCDFDWREVEILMFLSAIVMMKNRRSITVEQHIGNIFMFSKVANA. A helical transmembrane segment spans residues 103–125; sequence ILFFRLDIRMGLLYITLCIVFLM. The region spanning 114–270 is the Thioredoxin domain; it reads LLYITLCIVF…YQRAKKPSKA (157 aa). Over 126-296 the chain is Cytoplasmic; that stretch reads TCEPPLYMGP…VSDGENKKDK (171 aa). Phosphoserine is present on residues Ser211, Ser243, and Ser288. The segment at 266-296 is disordered; that stretch reads KPSKAGDSIPEEQPVASAPTTVSDGENKKDK. The short motif at 293-296 is the Di-lysine motif element; it reads KKDK.

In terms of assembly, monomer. Homodimer; disulfide-linked. Occurs in both reduced and oxidized monomeric form. Oxidative conditions increase homodimerization. Interacts with CANX. Interacts with ATP2A2.

The protein localises to the endoplasmic reticulum membrane. The protein resides in the mitochondrion membrane. Endoplasmic reticulum and mitochondria-associated protein that probably functions as a regulator of cellular redox state and thereby regulates protein post-translational modification, protein folding and mitochondrial activity. Indirectly regulates neuronal proliferation, migration, and organization in the developing brain. The chain is Thioredoxin-related transmembrane protein 2 (TMX2) from Pongo abelii (Sumatran orangutan).